Here is a 200-residue protein sequence, read N- to C-terminus: Large ribosomal subunit protein bL9 (200 aa).

This sequence belongs to the bacterial ribosomal protein bL9 family.

Binds to the 23S rRNA. In Ruegeria pomeroyi (strain ATCC 700808 / DSM 15171 / DSS-3) (Silicibacter pomeroyi), this protein is Large ribosomal subunit protein bL9.